Consider the following 412-residue polypeptide: Peptidase T (412 aa).

Position 84 (H84) interacts with Zn(2+). D86 is an active-site residue. D146 serves as a coordination point for Zn(2+). E179 serves as the catalytic Proton acceptor. Zn(2+) contacts are provided by E180, D202, and H385.

This sequence belongs to the peptidase M20B family. The cofactor is Zn(2+).

It localises to the cytoplasm. It carries out the reaction Release of the N-terminal residue from a tripeptide.. Cleaves the N-terminal amino acid of tripeptides. The chain is Peptidase T from Haemophilus influenzae (strain PittEE).